A 460-amino-acid chain; its full sequence is Probable carboxypeptidase ARB_01041 (460 aa).

Positions 1–22 (MQKTYIWALVSLLASSLVDARS) are cleaved as a signal peptide. Residue Asn98 is glycosylated (N-linked (GlcNAc...) asparagine). Zn(2+) is bound at residue Asp175. Residue Glu207 is the Proton acceptor of the active site. Zn(2+) is bound at residue Glu208. Asn395 carries N-linked (GlcNAc...) asparagine glycosylation.

Belongs to the peptidase M20A family. The cofactor is Zn(2+).

It localises to the secreted. In Arthroderma benhamiae (strain ATCC MYA-4681 / CBS 112371) (Trichophyton mentagrophytes), this protein is Probable carboxypeptidase ARB_01041.